The following is a 194-amino-acid chain: MILPIVGYGDPVLRKVCEEITKDYINLEETIANMYETMYNACGVGLAAPQVGLPIRLFIVDADPFSDSDDISKEEAAALKGFKKTFINAKMLKEEGEEWSFSEGCLSIPDVREDVYRNPNITIEYYDENFNKKTEEYNGLIARVIQHEYDHIEGVLFTDKITVFKKQFIKKKLQNIMEGKARPDYRMKLVPKKR.

Fe cation-binding residues include cysteine 105 and histidine 147. Residue glutamate 148 is part of the active site. A Fe cation-binding site is contributed by histidine 151.

Belongs to the polypeptide deformylase family. Fe(2+) is required as a cofactor.

The catalysed reaction is N-terminal N-formyl-L-methionyl-[peptide] + H2O = N-terminal L-methionyl-[peptide] + formate. Functionally, removes the formyl group from the N-terminal Met of newly synthesized proteins. Requires at least a dipeptide for an efficient rate of reaction. N-terminal L-methionine is a prerequisite for activity but the enzyme has broad specificity at other positions. The sequence is that of Peptide deformylase from Flavobacterium psychrophilum (strain ATCC 49511 / DSM 21280 / CIP 103535 / JIP02/86).